The chain runs to 380 residues: Chaperone protein DnaJ (380 aa).

The 66-residue stretch at 6–71 (DYYAILEVSR…QKRAAYDQYG (66 aa)) folds into the J domain. The CR-type zinc finger occupies 136–215 (GVKKDVRVIT…CHGEGTVEKE (80 aa)). Zn(2+) contacts are provided by Cys149, Cys152, Cys167, Cys170, Cys189, Cys192, Cys203, and Cys206. CXXCXGXG motif repeat units follow at residues 149 to 156 (CEACHGTG), 167 to 174 (CPSCHGAG), 189 to 196 (CPTCHGAG), and 203 to 210 (CKVCHGEG).

This sequence belongs to the DnaJ family. In terms of assembly, homodimer. The cofactor is Zn(2+).

The protein resides in the cytoplasm. In terms of biological role, participates actively in the response to hyperosmotic and heat shock by preventing the aggregation of stress-denatured proteins and by disaggregating proteins, also in an autonomous, DnaK-independent fashion. Unfolded proteins bind initially to DnaJ; upon interaction with the DnaJ-bound protein, DnaK hydrolyzes its bound ATP, resulting in the formation of a stable complex. GrpE releases ADP from DnaK; ATP binding to DnaK triggers the release of the substrate protein, thus completing the reaction cycle. Several rounds of ATP-dependent interactions between DnaJ, DnaK and GrpE are required for fully efficient folding. Also involved, together with DnaK and GrpE, in the DNA replication of plasmids through activation of initiation proteins. This chain is Chaperone protein DnaJ, found in Acetobacter pasteurianus (strain NBRC 105184 / IFO 3283-01).